A 275-amino-acid chain; its full sequence is NAD(P)H-hydrate epimerase (275 aa).

The YjeF N-terminal domain occupies 49–258; that stretch reads AIKIDQELFS…ALAAKYELNL (210 aa). A (6S)-NADPHX-binding site is contributed by 102–106; the sequence is NNGGD. The K(+) site is built by asparagine 103 and aspartate 167. (6S)-NADPHX-binding positions include 171–177 and aspartate 200; that span reads GFSFKPP. Residue serine 203 coordinates K(+).

This sequence belongs to the NnrE/AIBP family. K(+) is required as a cofactor.

It catalyses the reaction (6R)-NADHX = (6S)-NADHX. The enzyme catalyses (6R)-NADPHX = (6S)-NADPHX. Functionally, catalyzes the epimerization of the S- and R-forms of NAD(P)HX, a damaged form of NAD(P)H that is a result of enzymatic or heat-dependent hydration. This is a prerequisite for the S-specific NAD(P)H-hydrate dehydratase to allow the repair of both epimers of NAD(P)HX. The polypeptide is NAD(P)H-hydrate epimerase (Ixodes scapularis (Black-legged tick)).